Here is a 101-residue protein sequence, read N- to C-terminus: Small integral membrane protein 21 (101 aa).

A helical transmembrane segment spans residues 49–65 (HIRFFTLLVLFHVMVLL).

The protein resides in the membrane. This Homo sapiens (Human) protein is Small integral membrane protein 21 (SMIM21).